The sequence spans 225 residues: Transmembrane protein C16orf54 homolog (225 aa).

Residues 32–52 (PCIPIMLGLASLTAFFIITTA) form a helical membrane-spanning segment. 2 disordered regions span residues 106-163 (DRAP…ERPH) and 178-200 (EAGL…EPDW). 2 positions are modified to phosphothreonine: threonine 113 and threonine 117. A compositionally biased stretch (low complexity) spans 122-140 (ATAPPATSAPYSSLSSLVP). Residue serine 195 is modified to Phosphoserine.

The protein localises to the membrane. The protein is Transmembrane protein C16orf54 homolog of Mus musculus (Mouse).